The chain runs to 281 residues: Aminoglycoside N(3)-acetyltransferase IX (281 aa).

The protein belongs to the antibiotic N-acetyltransferase family.

It carries out the reaction a 2-deoxystreptamine antibiotic + acetyl-CoA = an N(3)-acetyl-2-deoxystreptamine antibiotic + CoA + H(+). Resistance to neomycin. The protein is Aminoglycoside N(3)-acetyltransferase IX (aacC9) of Micromonospora chalcea.